The chain runs to 181 residues: Ribosome maturation factor RimM (181 aa).

Residues 98 to 172 (EDEFYFEDLI…RIVIPELSLW (75 aa)) enclose the PRC barrel domain.

Belongs to the RimM family. As to quaternary structure, binds ribosomal protein uS19.

Its subcellular location is the cytoplasm. Functionally, an accessory protein needed during the final step in the assembly of 30S ribosomal subunit, possibly for assembly of the head region. Essential for efficient processing of 16S rRNA. May be needed both before and after RbfA during the maturation of 16S rRNA. It has affinity for free ribosomal 30S subunits but not for 70S ribosomes. This Hyphomonas neptunium (strain ATCC 15444) protein is Ribosome maturation factor RimM.